A 922-amino-acid polypeptide reads, in one-letter code: Chaperone protein ClpC, chloroplastic (922 aa).

The transit peptide at 1–72 (MARVLAQSLS…RPGLDFHSKV (72 aa)) directs the protein to the chloroplast. The 143-residue stretch at 92–234 (FERFTEKAIK…RTQVIRMVGE (143 aa)) folds into the Clp R domain. Repeat regions lie at residues 95–160 (FTEK…IGRG) and 170–234 (FTPR…MVGE). The interval 255-502 (LEEYGTNLTK…RVRLQHAQLP (248 aa)) is i. An ATP-binding site is contributed by 300-307 (GEPGVGKT). The UVR domain occupies 509-544 (DKEVRKIVKEKEEYVRNQDFEKAGELRDKEMDLKAQ). Positions 569–760 (VTEVDIQHIV…LLIMTSNVGS (192 aa)) are II. 643–650 (GPTGVGKS) is a binding site for ATP.

The protein belongs to the ClpA/ClpB family. ClpC subfamily.

The protein resides in the plastid. The protein localises to the chloroplast. Its function is as follows. Molecular chaperone that may interact with a ClpP-like protease involved in degradation of denatured proteins in the chloroplast. This Pisum sativum (Garden pea) protein is Chaperone protein ClpC, chloroplastic.